Here is a 93-residue protein sequence, read N- to C-terminus: Auxin-responsive protein SAUR26 (93 aa).

It belongs to the ARG7 family. As to quaternary structure, interacts with PP2C-D1. In terms of tissue distribution, higher expression in thermo-responsive cultivars (e.g. cv. Alst-1, cv. Ang-0 and cv. Com-0) than in low thermo-responsive cultivars (e.g. cv. Dja-1, cv. El-0 and cv. Kon).

The protein localises to the cell membrane. Its function is as follows. Provide a mechanistic link between auxin and plasma membrane H(+)-ATPases (PM H(+)-ATPases, e.g. AHA1 and AHA2), and triggers PM H(+)-ATPases activity by promoting phosphorylation of their C-terminal autoinhibitory domain as a result of PP2C-D subfamily of type 2C phosphatases inhibition, thus leading to the acidification of the apoplast and the facilitation of solutes and water uptake to drive cell expansion. Functions as a positive effectors of cell expansion through modulation of auxin transport. Involved in thermo-responsiveness of plant architecture. Enhances plasma membrane H(+)-ATPase. Probably involved in light intensity mediated root development. This chain is Auxin-responsive protein SAUR26, found in Arabidopsis thaliana (Mouse-ear cress).